The following is a 678-amino-acid chain: Glycine--tRNA ligase beta subunit (678 aa).

Belongs to the class-II aminoacyl-tRNA synthetase family. Tetramer of two alpha and two beta subunits.

The protein resides in the cytoplasm. It carries out the reaction tRNA(Gly) + glycine + ATP = glycyl-tRNA(Gly) + AMP + diphosphate. The protein is Glycine--tRNA ligase beta subunit of Streptococcus pneumoniae (strain Hungary19A-6).